Reading from the N-terminus, the 154-residue chain is Large ribosomal subunit protein uL13 (154 aa).

The protein belongs to the universal ribosomal protein uL13 family. In terms of assembly, part of the 50S ribosomal subunit.

This protein is one of the early assembly proteins of the 50S ribosomal subunit, although it is not seen to bind rRNA by itself. It is important during the early stages of 50S assembly. This is Large ribosomal subunit protein uL13 from Rhizobium johnstonii (strain DSM 114642 / LMG 32736 / 3841) (Rhizobium leguminosarum bv. viciae).